The primary structure comprises 539 residues: GMP synthase [glutamine-hydrolyzing] (539 aa).

In terms of domain architecture, Glutamine amidotransferase type-1 spans 20–215; that stretch reads TILILDFGSQ…AIEICHAKPN (196 aa). C96 serves as the catalytic Nucleophile. Catalysis depends on residues H189 and E191. The 198-residue stretch at 216–413 folds into the GMPS ATP-PPase domain; that stretch reads WSMENFVDKE…LGIEHSLVWR (198 aa). 244–250 contacts ATP; the sequence is SGGVDST. R317, D475, K531, and E537 together coordinate XMP.

As to quaternary structure, homodimer. The cofactor is Mg(2+).

The protein localises to the cytoplasm. Its subcellular location is the cytosol. It catalyses the reaction XMP + L-glutamine + ATP + H2O = GMP + L-glutamate + AMP + diphosphate + 2 H(+). Its pathway is purine metabolism; GMP biosynthesis; GMP from XMP (L-Gln route): step 1/1. In terms of biological role, catalyzes the conversion of xanthine monophosphate (XMP) to GMP in the presence of glutamine and ATP through an adenyl-XMP intermediate. This Schizosaccharomyces pombe (strain 972 / ATCC 24843) (Fission yeast) protein is GMP synthase [glutamine-hydrolyzing].